The sequence spans 549 residues: Glucose-6-phosphate isomerase (549 aa).

Glutamate 353 (proton donor) is an active-site residue. Residues histidine 384 and lysine 513 contribute to the active site.

Belongs to the GPI family.

The protein localises to the cytoplasm. It carries out the reaction alpha-D-glucose 6-phosphate = beta-D-fructose 6-phosphate. It participates in carbohydrate biosynthesis; gluconeogenesis. Its pathway is carbohydrate degradation; glycolysis; D-glyceraldehyde 3-phosphate and glycerone phosphate from D-glucose: step 2/4. In terms of biological role, catalyzes the reversible isomerization of glucose-6-phosphate to fructose-6-phosphate. This is Glucose-6-phosphate isomerase from Brucella suis (strain ATCC 23445 / NCTC 10510).